A 288-amino-acid polypeptide reads, in one-letter code: ATP synthase subunit a (288 aa).

A run of 6 helical transmembrane segments spans residues 47 to 67 (LDSMLWSIGLGIVFCALFWLV), 104 to 124 (LIAPLALTIFVWIFLMNLMDL), 157 to 177 (DPNITLGMSFSVFALIIYYSI), 199 to 219 (PIAKIILIPINFILEFVTLIA), 237 to 257 (LIFVLIALMPFWIQWALSVPW), and 258 to 278 (AIFHILIITLQAFVFMMLTIV).

It belongs to the ATPase A chain family. F-type ATPases have 2 components, CF(1) - the catalytic core - and CF(0) - the membrane proton channel. CF(1) has five subunits: alpha(3), beta(3), gamma(1), delta(1), epsilon(1). CF(0) has three main subunits: a(1), b(2) and c(9-12). The alpha and beta chains form an alternating ring which encloses part of the gamma chain. CF(1) is attached to CF(0) by a central stalk formed by the gamma and epsilon chains, while a peripheral stalk is formed by the delta and b chains.

It is found in the cell inner membrane. Its function is as follows. Key component of the proton channel; it plays a direct role in the translocation of protons across the membrane. The sequence is that of ATP synthase subunit a from Psychrobacter sp. (strain PRwf-1).